We begin with the raw amino-acid sequence, 342 residues long: Bifunctional terpene synthase Agr4 (342 aa).

Residues Asp-87, Asn-222, Ser-226, and Glu-230 each coordinate Mg(2+). Positions 87 to 91 (DEVSD) match the DDXXD motif motif. (2E,6E)-farnesyl diphosphate contacts are provided by Arg-308 and Tyr-309.

Belongs to the terpene synthase family. It depends on Mg(2+) as a cofactor.

It catalyses the reaction (2E,6E)-farnesyl diphosphate = delta-cadinene + diphosphate. The catalysed reaction is (2E,6E)-farnesyl diphosphate = gamma-muurolene + diphosphate. The enzyme catalyses (2E,6E)-farnesyl diphosphate = beta-copaene + diphosphate. It carries out the reaction (2E)-geranyl diphosphate = beta-myrcene + diphosphate. Its function is as follows. Terpene cyclase that catalyzes the cyclization of farnesyl diphosphate (FPP) to various sesquiterpenes, including beta-copaene, alpha-cubebene, cadina-1(6),4-diene, gamma-muurolene, delta-cadinene, epizonarene, epicubenol and cubenol. Agr4 is also able to use the monoterpene precursor geranyl diphosphate (GPP) as substrates to synthesize the monoterpene beta-myrcene. Delta-cadinene is the major product of Agr4. The chain is Bifunctional terpene synthase Agr4 from Cyclocybe aegerita (Black poplar mushroom).